The chain runs to 161 residues: Type IV major fimbrial protein FimA (161 aa).

Positions 1 to 7 (MKSLQKG) are cleaved as a propeptide — leader sequence. Position 8 is an N-methylphenylalanine (F8). Residues 8-28 (FTLIELMIVVAIIGILAAFAI) form a helical membrane-spanning segment. C63 and C106 are oxidised to a cystine.

The protein belongs to the N-Me-Phe pilin family. The pili are polar flexible filaments of about 5.4 nanometers diameter and 2.5 micrometers average length; they consist of only a single polypeptide chain arranged in a helical configuration of five subunits per turn in the assembled pilus.

It is found in the fimbrium. The protein localises to the membrane. In terms of biological role, major component of the type IV fimbriae that plays an essential role in twitching motility, natural transformation, and protease secretion. This Dichelobacter nodosus (Bacteroides nodosus) protein is Type IV major fimbrial protein FimA (fimA).